A 400-amino-acid polypeptide reads, in one-letter code: 1-deoxy-D-xylulose 5-phosphate reductoisomerase (400 aa).

Positions 10, 11, 12, 13, 36, 38, and 124 each coordinate NADPH. Lysine 125 serves as a coordination point for 1-deoxy-D-xylulose 5-phosphate. Position 126 (glutamate 126) interacts with NADPH. Residue aspartate 150 participates in Mn(2+) binding. Residues serine 151, glutamate 152, serine 186, and histidine 209 each contribute to the 1-deoxy-D-xylulose 5-phosphate site. Glutamate 152 serves as a coordination point for Mn(2+). Residue glycine 215 participates in NADPH binding. Serine 222, asparagine 227, lysine 228, and glutamate 231 together coordinate 1-deoxy-D-xylulose 5-phosphate. Mn(2+) is bound at residue glutamate 231.

This sequence belongs to the DXR family. Mg(2+) serves as cofactor. Requires Mn(2+) as cofactor.

It catalyses the reaction 2-C-methyl-D-erythritol 4-phosphate + NADP(+) = 1-deoxy-D-xylulose 5-phosphate + NADPH + H(+). Its pathway is isoprenoid biosynthesis; isopentenyl diphosphate biosynthesis via DXP pathway; isopentenyl diphosphate from 1-deoxy-D-xylulose 5-phosphate: step 1/6. In terms of biological role, catalyzes the NADPH-dependent rearrangement and reduction of 1-deoxy-D-xylulose-5-phosphate (DXP) to 2-C-methyl-D-erythritol 4-phosphate (MEP). This Aliivibrio salmonicida (strain LFI1238) (Vibrio salmonicida (strain LFI1238)) protein is 1-deoxy-D-xylulose 5-phosphate reductoisomerase.